The chain runs to 73 residues: Large ribosomal subunit protein bL32c (73 aa).

It belongs to the bacterial ribosomal protein bL32 family.

It is found in the plastid. The protein localises to the chloroplast. The protein is Large ribosomal subunit protein bL32c of Jasminum nudiflorum (Winter jasmine).